A 161-amino-acid polypeptide reads, in one-letter code: MKLGHREQQFYLWYFIVHIPITIFIDSSVVIPAKWQLGIAQKVVSDHIAKQHDFLLSEKPEWLYWFVVLELVLQLPLFVYFVNKFWNSSELQVNTNSRLKKWLRIYGWNASLTTLICIVVIFKRGYIPYDVLKTSLSMTQKCQLASVYLPTFLIPLRLCFV.

Residues 1 to 10 are Cytoplasmic-facing; sequence MKLGHREQQF. The EXPERA domain maps to 7-159; it reads EQQFYLWYFI…PTFLIPLRLC (153 aa). Residues 11–31 traverse the membrane as a helical segment; sequence YLWYFIVHIPITIFIDSSVVI. The Lumenal segment spans residues 32-61; it reads PAKWQLGIAQKVVSDHIAKQHDFLLSEKPE. Residues 62–82 form a helical membrane-spanning segment; sequence WLYWFVVLELVLQLPLFVYFV. Over 83 to 101 the chain is Cytoplasmic; sequence NKFWNSSELQVNTNSRLKK. Residues 102 to 122 traverse the membrane as a helical segment; the sequence is WLRIYGWNASLTTLICIVVIF. At 123-141 the chain is on the lumenal side; that stretch reads KRGYIPYDVLKTSLSMTQK. A helical transmembrane segment spans residues 142 to 160; sequence CQLASVYLPTFLIPLRLCF. Residue V161 is a topological domain, cytoplasmic.

This sequence belongs to the TMEM97/sigma-2 receptor family.

It is found in the endoplasmic reticulum membrane. In terms of biological role, part of an import route for newly synthesized mitochondrial proteins termed the ER-SURF pathway (ER surface-mediated protein targeting), which retrieves mitochondrial precursor proteins from the ER surface and reroutes them to mitochondria for efficient mitochondrial import. Acts as a quality control factor in the ER, promoting the proteolytic degradation of nonproductive and extramitochondrial precursor proteins in the ER membrane thus removing them from the ER surface. This Saccharomyces cerevisiae (strain ATCC 204508 / S288c) (Baker's yeast) protein is Efficient mitochondria targeting-associated protein 19.